Consider the following 390-residue polypeptide: Cystathionine beta-lyase MetC (390 aa).

Lysine 200 bears the N6-(pyridoxal phosphate)lysine mark.

This sequence belongs to the trans-sulfuration enzymes family. In terms of assembly, homotetramer. Pyridoxal 5'-phosphate is required as a cofactor.

The protein resides in the cytoplasm. It catalyses the reaction L,L-cystathionine + H2O = L-homocysteine + pyruvate + NH4(+). It carries out the reaction an S-substituted L-cysteine + H2O = a thiol + pyruvate + NH4(+). It functions in the pathway amino-acid biosynthesis; L-methionine biosynthesis via de novo pathway; L-homocysteine from L-cystathionine: step 1/1. In terms of biological role, catalyzes the transformation of cystathionine into homocysteine. Also exhibits cysteine desulfhydrase activity in vitro, producing sulfide from cysteine. The polypeptide is Cystathionine beta-lyase MetC (metC) (Bacillus subtilis (strain 168)).